A 468-amino-acid chain; its full sequence is MGGCVSTSSKSTCSSWSNGEKPVRRPYLGIGCCVSKRAKRTFSDHIVSLQNLTSIPNRITSSSKSRSSCIFTQQGRKGINQDAMIVWEDFMSEDVTFCGVFDGHGPYGHLVARKVRDTLPVKLQFFFQTLQSKQNCSKGTRFRRNSSKSAVQEAVKEGSDEDKLKGLWGEAFLKSFKAMDKELRSHPNLDCFCSGSTGVTILKQGSNLFMGNIGDSRAILGSKDSNDSMVATQLTVDLKPDLPREAERIKRCKGRVFAMEDEPEVPRVWLPYDDAPGLAMARAFGDFCLKEYGVISVPEFTHRVLTDRDQFIVLASDGVWDVLSNEEVVDIVASATSRASAARTLVNSAAREWKLKYPTSKMDDCAVVCLFLDGKMDSESDYDEQGFSSATNAVESDDGQRSEPCLQRNFTVRSSSDQENETYGNVNTETDAEDEKTVGDQNWLGLQGVTRVNSLVQLPRFSEEKSKT.

One can recognise a PPM-type phosphatase domain in the interval 67-372; the sequence is SSCIFTQQGR…DDCAVVCLFL (306 aa). Mn(2+) contacts are provided by aspartate 102, glycine 103, aspartate 317, and aspartate 363. The span at 413–429 shows a compositional bias: polar residues; it reads RSSSDQENETYGNVNTE. The tract at residues 413 to 442 is disordered; the sequence is RSSSDQENETYGNVNTETDAEDEKTVGDQN.

Belongs to the PP2C family. The cofactor is Mg(2+). Requires Mn(2+) as cofactor.

The enzyme catalyses O-phospho-L-seryl-[protein] + H2O = L-seryl-[protein] + phosphate. The catalysed reaction is O-phospho-L-threonyl-[protein] + H2O = L-threonyl-[protein] + phosphate. This Arabidopsis thaliana (Mouse-ear cress) protein is Probable protein phosphatase 2C 52.